The primary structure comprises 250 residues: Small ribosomal subunit protein uS3 (250 aa).

The KH type-2 domain maps to 39–111 (IRTLIKNNYP…KVQINIFEVK (73 aa)).

This sequence belongs to the universal ribosomal protein uS3 family. In terms of assembly, part of the 30S ribosomal subunit. Forms a tight complex with proteins S10 and S14.

Its function is as follows. Binds the lower part of the 30S subunit head. Binds mRNA in the 70S ribosome, positioning it for translation. The protein is Small ribosomal subunit protein uS3 of Alder yellows phytoplasma.